Consider the following 153-residue polypeptide: Small ribosomal subunit protein bS6 (153 aa).

Residues 97 to 153 (EEGPSAMMRKADRDRERDDRGGGFRGERDGGGFRGDRGDRGDRGPRRPRDEETADEE) form a disordered region. The span at 105 to 147 (RKADRDRERDDRGGGFRGERDGGGFRGDRGDRGDRGPRRPRDE) shows a compositional bias: basic and acidic residues.

This sequence belongs to the bacterial ribosomal protein bS6 family.

Functionally, binds together with bS18 to 16S ribosomal RNA. The sequence is that of Small ribosomal subunit protein bS6 from Bradyrhizobium sp. (strain BTAi1 / ATCC BAA-1182).